The following is a 102-amino-acid chain: Small ribosomal subunit protein uS10 (102 aa).

The protein belongs to the universal ribosomal protein uS10 family. As to quaternary structure, part of the 30S ribosomal subunit.

Involved in the binding of tRNA to the ribosomes. This is Small ribosomal subunit protein uS10 from Cenarchaeum symbiosum (strain A).